The following is a 194-amino-acid chain: ATP-dependent Clp protease proteolytic subunit (194 aa).

Catalysis depends on Ser-97, which acts as the Nucleophile. His-122 is a catalytic residue.

The protein belongs to the peptidase S14 family. In terms of assembly, fourteen ClpP subunits assemble into 2 heptameric rings which stack back to back to give a disk-like structure with a central cavity, resembling the structure of eukaryotic proteasomes.

The protein resides in the cytoplasm. The enzyme catalyses Hydrolysis of proteins to small peptides in the presence of ATP and magnesium. alpha-casein is the usual test substrate. In the absence of ATP, only oligopeptides shorter than five residues are hydrolyzed (such as succinyl-Leu-Tyr-|-NHMec, and Leu-Tyr-Leu-|-Tyr-Trp, in which cleavage of the -Tyr-|-Leu- and -Tyr-|-Trp bonds also occurs).. Functionally, cleaves peptides in various proteins in a process that requires ATP hydrolysis. Has a chymotrypsin-like activity. Plays a major role in the degradation of misfolded proteins. The chain is ATP-dependent Clp protease proteolytic subunit from Campylobacter jejuni subsp. jejuni serotype O:6 (strain 81116 / NCTC 11828).